We begin with the raw amino-acid sequence, 417 residues long: Lactose permease (417 aa).

Residue methionine 1 is modified to N-formylmethionine; partial. Residues 1–7 (MYYLKNT) are Cytoplasmic-facing. A helical transmembrane segment spans residues 8 to 34 (NFWMFGLFFFFYFFIMGAYFPFFPIWL). Over 35 to 41 (HDINHIS) the chain is Periplasmic. The helical transmembrane segment at 42-70 (KSDTGIIFAAISLFSLLFQPLFGLLSDKL) threads the bilayer. Topologically, residues 71 to 74 (GLRK) are cytoplasmic. The chain crosses the membrane as a helical span at residues 75 to 100 (YLLWIITGMLVMFAPFFIFIFGPLLQ). Residues 101–104 (YNIL) are Periplasmic-facing. A helical transmembrane segment spans residues 105–129 (VGSIVGGIYLGFCFNAGAPAVEAFI). The Cytoplasmic segment spans residues 130–140 (EKVSRRSNFEF). Residues 141-163 (GRARMFGCVGWALCASIVGIMFT) form a helical membrane-spanning segment. The Periplasmic portion of the chain corresponds to 164–166 (INN). Residues 167 to 186 (QFVFWLGSGCALILAVLLFF) traverse the membrane as a helical segment. The Cytoplasmic segment spans residues 187-220 (AKTDAPSSATVANAVGANHSAFSLKLALELFRQP). Residues 221–249 (KLWFLSLYVIGVSCTYDVFDQQFANFFTS) traverse the membrane as a helical segment. The Periplasmic portion of the chain corresponds to 250–253 (FFAT). The chain crosses the membrane as a helical span at residues 254 to 278 (GEQGTRVFGYVTTMGELLNASIMFF). Topologically, residues 279–288 (APLIINRIGG) are cytoplasmic. A helical transmembrane segment spans residues 289–308 (KNALLLAGTIMSVRIIGSSF). Over 309–311 (ATS) the chain is Periplasmic. A helical membrane pass occupies residues 312-334 (ALEVVILKTLHMFEVPFLLVGCF). The Cytoplasmic portion of the chain corresponds to 335–346 (KYITSQFEVRFS). Residues 347–374 (ATIYLVCFCFFKQLAMIFMSVLAGNMYE) traverse the membrane as a helical segment. Residues 375–377 (SIG) lie on the Periplasmic side of the membrane. The chain crosses the membrane as a helical span at residues 378–398 (FQGAYLVLGLVALGFTLISVF). Residues 399–417 (TLSGPGPLSLLRRQVNEVA) lie on the Cytoplasmic side of the membrane.

As to quaternary structure, monomer.

It localises to the cell inner membrane. It carries out the reaction lactose(in) + H(+)(in) = lactose(out) + H(+)(out). The enzyme catalyses melibiose(in) + H(+)(in) = melibiose(out) + H(+)(out). Its activity is regulated as follows. Inhibited by the proton ionophore carbonyl cyanide m-chlorophenylhydrazone (CCCP). Functionally, responsible for transport of beta-galactosides into the cell, with the concomitant import of a proton (symport system). Can transport lactose, melibiose, the synthetic disaccharide lactulose or the analog methyl-1-thio-beta,D-galactopyranoside (TMG), but not sucrose or fructose. The substrate specificity is directed toward the galactopyranosyl moiety of the substrate. In Escherichia coli (strain K12), this protein is Lactose permease.